Consider the following 505-residue polypeptide: Protein phosphatase 1J (505 aa).

Positions 1–103 (MLNRVRSAVA…PPDTGRRLPW (103 aa)) are disordered. A compositionally biased stretch (low complexity) spans 27–50 (DLPNAASAPPAAAPEAPRSPPAKA). Serine 66 and serine 76 each carry phosphoserine. The 395-residue stretch at 104-498 (STGYAEVINA…DDISVFVIPL (395 aa)) folds into the PPM-type phosphatase domain.

This sequence belongs to the PP2C family. In terms of assembly, interacts with UBE2I/UBC9.

The enzyme catalyses O-phospho-L-seryl-[protein] + H2O = L-seryl-[protein] + phosphate. The catalysed reaction is O-phospho-L-threonyl-[protein] + H2O = L-threonyl-[protein] + phosphate. In Homo sapiens (Human), this protein is Protein phosphatase 1J (PPM1J).